Here is a 793-residue protein sequence, read N- to C-terminus: Protein PAT1 homolog (793 aa).

Phosphoserine is present on residues serine 200 and serine 208. Disordered regions lie at residues 203–256 and 292–312; these read PPGS…TGNR and MLQQ…GSQN. The segment covering 219–242 has biased composition (polar residues); that stretch reads PYQSGGPQMGSPNFSPFPNLQPQL. Phosphoserine is present on residues serine 342 and serine 343. Residues 476 to 501 are disordered; sequence RPLLEVDPPNSAKFGNAEHKPTDKPL. A compositionally biased stretch (basic and acidic residues) spans 491 to 501; sequence NAEHKPTDKPL.

In terms of assembly, interacts with MPK4 and SUMM2. Post-translationally, phosphorylated at Ser-208 by MPK4 upon flg22 elicitation. Phosphorylated at Ser-200, Ser-342 and Ser-343 upon flg22 elicitation.

The protein localises to the cytoplasm. It localises to the P-body. Its function is as follows. Activator of mRNA decapping. Involved in mRNA decay via decapping. Involved in disease resistance in response to biotrophic and necrotrophic pathogens. Is part of a signaling pathway including MPK4 and the disease resistance protein SUMM2. The polypeptide is Protein PAT1 homolog (Arabidopsis thaliana (Mouse-ear cress)).